A 504-amino-acid polypeptide reads, in one-letter code: Anaerobic nitric oxide reductase transcription regulator NorR (504 aa).

4-aspartylphosphate is present on D57. Residues 187–416 (MIGLSPGMTQ…LEHAIHRAVV (230 aa)) form the Sigma-54 factor interaction domain. Residues 215-222 (GETGTGKE) and 278-287 (ADNGTLFLDE) contribute to the ATP site. Residues 479–498 (WAACARMLETDVANLHRLAK) constitute a DNA-binding region (H-T-H motif).

It functions in the pathway nitrogen metabolism; nitric oxide reduction. Functionally, required for the expression of anaerobic nitric oxide (NO) reductase, acts as a transcriptional activator for at least the norVW operon. Activation also requires sigma-54. This chain is Anaerobic nitric oxide reductase transcription regulator NorR, found in Escherichia coli O45:K1 (strain S88 / ExPEC).